The sequence spans 486 residues: UDP-N-acetylmuramate--L-alanine ligase (486 aa).

Position 126–132 (126–132) interacts with ATP; sequence GTHGKTS.

This sequence belongs to the MurCDEF family.

It is found in the cytoplasm. The catalysed reaction is UDP-N-acetyl-alpha-D-muramate + L-alanine + ATP = UDP-N-acetyl-alpha-D-muramoyl-L-alanine + ADP + phosphate + H(+). It functions in the pathway cell wall biogenesis; peptidoglycan biosynthesis. Cell wall formation. The chain is UDP-N-acetylmuramate--L-alanine ligase from Corynebacterium glutamicum (strain R).